A 40-amino-acid polypeptide reads, in one-letter code: Photosystem II reaction center protein L (40 aa).

A helical transmembrane segment spans residues 19–39; that stretch reads SLYWGLLLIFVLAVLFSNYFF.

Belongs to the PsbL family. As to quaternary structure, PSII is composed of 1 copy each of membrane proteins PsbA, PsbB, PsbC, PsbD, PsbE, PsbF, PsbH, PsbI, PsbJ, PsbK, PsbL, PsbM, PsbT, PsbX, PsbY, PsbZ, Psb30/Ycf12, at least 3 peripheral proteins of the oxygen-evolving complex and a large number of cofactors. It forms dimeric complexes.

The protein resides in the plastid. It is found in the chloroplast thylakoid membrane. Functionally, one of the components of the core complex of photosystem II (PSII). PSII is a light-driven water:plastoquinone oxidoreductase that uses light energy to abstract electrons from H(2)O, generating O(2) and a proton gradient subsequently used for ATP formation. It consists of a core antenna complex that captures photons, and an electron transfer chain that converts photonic excitation into a charge separation. This subunit is found at the monomer-monomer interface and is required for correct PSII assembly and/or dimerization. This is Photosystem II reaction center protein L from Nandina domestica (Heavenly bamboo).